Consider the following 228-residue polypeptide: Ribosomal RNA large subunit methyltransferase E (228 aa).

Glycine 76, tryptophan 78, aspartate 99, aspartate 115, and aspartate 139 together coordinate S-adenosyl-L-methionine. Catalysis depends on lysine 179, which acts as the Proton acceptor.

This sequence belongs to the class I-like SAM-binding methyltransferase superfamily. RNA methyltransferase RlmE family.

The protein localises to the cytoplasm. The catalysed reaction is uridine(2552) in 23S rRNA + S-adenosyl-L-methionine = 2'-O-methyluridine(2552) in 23S rRNA + S-adenosyl-L-homocysteine + H(+). In terms of biological role, specifically methylates the uridine in position 2552 of 23S rRNA at the 2'-O position of the ribose in the fully assembled 50S ribosomal subunit. This is Ribosomal RNA large subunit methyltransferase E from Nitrobacter hamburgensis (strain DSM 10229 / NCIMB 13809 / X14).